A 453-amino-acid polypeptide reads, in one-letter code: tRNA modification GTPase MnmE (453 aa).

Positions 22, 79, and 119 each coordinate (6S)-5-formyl-5,6,7,8-tetrahydrofolate. The region spanning 215–376 (GMKVVIAGRP…LREHLKACMG (162 aa)) is the TrmE-type G domain. Asn225 lines the K(+) pocket. GTP-binding positions include 225-230 (NAGKSS), 244-250 (TEIAGTT), 269-272 (DTAG), and 334-337 (NKAD). Mg(2+) is bound at residue Ser229. Residues Thr244, Ile246, and Thr249 each contribute to the K(+) site. Mg(2+) is bound at residue Thr250. (6S)-5-formyl-5,6,7,8-tetrahydrofolate is bound at residue Lys453.

It belongs to the TRAFAC class TrmE-Era-EngA-EngB-Septin-like GTPase superfamily. TrmE GTPase family. Homodimer. Heterotetramer of two MnmE and two MnmG subunits. Requires K(+) as cofactor.

The protein resides in the cytoplasm. Functionally, exhibits a very high intrinsic GTPase hydrolysis rate. Involved in the addition of a carboxymethylaminomethyl (cmnm) group at the wobble position (U34) of certain tRNAs, forming tRNA-cmnm(5)s(2)U34. In Aeromonas hydrophila subsp. hydrophila (strain ATCC 7966 / DSM 30187 / BCRC 13018 / CCUG 14551 / JCM 1027 / KCTC 2358 / NCIMB 9240 / NCTC 8049), this protein is tRNA modification GTPase MnmE.